The sequence spans 876 residues: Phosphoenolpyruvate carboxylase (876 aa).

Residues histidine 138 and lysine 543 contribute to the active site.

Belongs to the PEPCase type 1 family. Mg(2+) is required as a cofactor.

It carries out the reaction oxaloacetate + phosphate = phosphoenolpyruvate + hydrogencarbonate. Its function is as follows. Forms oxaloacetate, a four-carbon dicarboxylic acid source for the tricarboxylic acid cycle. The polypeptide is Phosphoenolpyruvate carboxylase (Aliivibrio salmonicida (strain LFI1238) (Vibrio salmonicida (strain LFI1238))).